The chain runs to 179 residues: Acireductone dioxygenase (179 aa).

Histidine 97, histidine 99, glutamate 103, and histidine 141 together coordinate Fe(2+). Ni(2+) contacts are provided by histidine 97, histidine 99, glutamate 103, and histidine 141.

The protein belongs to the acireductone dioxygenase (ARD) family. As to quaternary structure, monomer. Fe(2+) serves as cofactor. It depends on Ni(2+) as a cofactor.

It catalyses the reaction 1,2-dihydroxy-5-(methylsulfanyl)pent-1-en-3-one + O2 = 3-(methylsulfanyl)propanoate + CO + formate + 2 H(+). The enzyme catalyses 1,2-dihydroxy-5-(methylsulfanyl)pent-1-en-3-one + O2 = 4-methylsulfanyl-2-oxobutanoate + formate + 2 H(+). Its pathway is amino-acid biosynthesis; L-methionine biosynthesis via salvage pathway; L-methionine from S-methyl-5-thio-alpha-D-ribose 1-phosphate: step 5/6. Catalyzes 2 different reactions between oxygen and the acireductone 1,2-dihydroxy-3-keto-5-methylthiopentene (DHK-MTPene) depending upon the metal bound in the active site. Fe-containing acireductone dioxygenase (Fe-ARD) produces formate and 2-keto-4-methylthiobutyrate (KMTB), the alpha-ketoacid precursor of methionine in the methionine recycle pathway. Ni-containing acireductone dioxygenase (Ni-ARD) produces methylthiopropionate, carbon monoxide and formate, and does not lie on the methionine recycle pathway. The chain is Acireductone dioxygenase from Gluconacetobacter diazotrophicus (strain ATCC 49037 / DSM 5601 / CCUG 37298 / CIP 103539 / LMG 7603 / PAl5).